Reading from the N-terminus, the 420-residue chain is UDP-N-acetylglucosamine 1-carboxyvinyltransferase (420 aa).

22–23 (KN) provides a ligand contact to phosphoenolpyruvate. Arginine 93 is a binding site for UDP-N-acetyl-alpha-D-glucosamine. The active-site Proton donor is the cysteine 117. A 2-(S-cysteinyl)pyruvic acid O-phosphothioketal modification is found at cysteine 117. Residues 122–126 (RPVDL), aspartate 307, and valine 329 contribute to the UDP-N-acetyl-alpha-D-glucosamine site.

It belongs to the EPSP synthase family. MurA subfamily.

It localises to the cytoplasm. It carries out the reaction phosphoenolpyruvate + UDP-N-acetyl-alpha-D-glucosamine = UDP-N-acetyl-3-O-(1-carboxyvinyl)-alpha-D-glucosamine + phosphate. It participates in cell wall biogenesis; peptidoglycan biosynthesis. Cell wall formation. Adds enolpyruvyl to UDP-N-acetylglucosamine. This Hahella chejuensis (strain KCTC 2396) protein is UDP-N-acetylglucosamine 1-carboxyvinyltransferase.